The primary structure comprises 243 residues: 1-(5-phosphoribosyl)-5-[(5-phosphoribosylamino)methylideneamino] imidazole-4-carboxamide isomerase (243 aa).

The Proton acceptor role is filled by D8. The Proton donor role is filled by D129.

The protein belongs to the HisA/HisF family.

It is found in the cytoplasm. The enzyme catalyses 1-(5-phospho-beta-D-ribosyl)-5-[(5-phospho-beta-D-ribosylamino)methylideneamino]imidazole-4-carboxamide = 5-[(5-phospho-1-deoxy-D-ribulos-1-ylimino)methylamino]-1-(5-phospho-beta-D-ribosyl)imidazole-4-carboxamide. Its pathway is amino-acid biosynthesis; L-histidine biosynthesis; L-histidine from 5-phospho-alpha-D-ribose 1-diphosphate: step 4/9. The sequence is that of 1-(5-phosphoribosyl)-5-[(5-phosphoribosylamino)methylideneamino] imidazole-4-carboxamide isomerase from Citrifermentans bemidjiense (strain ATCC BAA-1014 / DSM 16622 / JCM 12645 / Bem) (Geobacter bemidjiensis).